Here is a 299-residue protein sequence, read N- to C-terminus: uncharacterized protein (299 aa).

This is an uncharacterized protein from Archaeoglobus fulgidus (strain ATCC 49558 / DSM 4304 / JCM 9628 / NBRC 100126 / VC-16).